A 376-amino-acid chain; its full sequence is UDP-N-acetylglucosamine--N-acetylmuramyl-(pentapeptide) pyrophosphoryl-undecaprenol N-acetylglucosamine transferase (376 aa).

Residues 11–13 (TGG), Asn-117, Arg-160, Ser-208, and Gln-310 each bind UDP-N-acetyl-alpha-D-glucosamine.

It belongs to the glycosyltransferase 28 family. MurG subfamily.

Its subcellular location is the cell inner membrane. The catalysed reaction is di-trans,octa-cis-undecaprenyl diphospho-N-acetyl-alpha-D-muramoyl-L-alanyl-D-glutamyl-meso-2,6-diaminopimeloyl-D-alanyl-D-alanine + UDP-N-acetyl-alpha-D-glucosamine = di-trans,octa-cis-undecaprenyl diphospho-[N-acetyl-alpha-D-glucosaminyl-(1-&gt;4)]-N-acetyl-alpha-D-muramoyl-L-alanyl-D-glutamyl-meso-2,6-diaminopimeloyl-D-alanyl-D-alanine + UDP + H(+). It functions in the pathway cell wall biogenesis; peptidoglycan biosynthesis. Cell wall formation. Catalyzes the transfer of a GlcNAc subunit on undecaprenyl-pyrophosphoryl-MurNAc-pentapeptide (lipid intermediate I) to form undecaprenyl-pyrophosphoryl-MurNAc-(pentapeptide)GlcNAc (lipid intermediate II). The protein is UDP-N-acetylglucosamine--N-acetylmuramyl-(pentapeptide) pyrophosphoryl-undecaprenol N-acetylglucosamine transferase of Rickettsia peacockii (strain Rustic).